The chain runs to 313 residues: Putative zinc finger protein 077L (313 aa).

Residues 174–199 (CFSITKGIECPHYSCTYIHNYSQIEH) form a C3H1-type zinc finger. The tract at residues 294–313 (SDDSDSENNDEDDDWKIDLF) is disordered. The span at 296–313 (DSDSENNDEDDDWKIDLF) shows a compositional bias: acidic residues.

It belongs to the IIV-6 077L family.

This is Putative zinc finger protein 077L from Invertebrate iridescent virus 6 (IIV-6).